Reading from the N-terminus, the 1059-residue chain is Translation initiation factor IF-2 (1059 aa).

Composition is skewed to polar residues over residues 55–75 and 107–126; these read LPHS…NQDS and KINN…NNQV. Disordered regions lie at residues 55 to 81, 93 to 394, and 418 to 468; these read LPHS…GYNE, PKPL…RLRL, and SLSL…QSAE. A compositionally biased stretch (basic and acidic residues) spans 178–187; that stretch reads DSNEKSKVEV. Residues 202–211 are compositionally biased toward polar residues; the sequence is LNRNLRNTGV. Residues 216–229 are compositionally biased toward basic residues; it reads QKNKKPKQEGKKRK. 2 stretches are compositionally biased toward basic and acidic residues: residues 230–252 and 259–273; these read DKEE…DTSI and SKKE…RESV. Over residues 274–284 the composition is skewed to polar residues; sequence KTSASDTSSQL. Basic and acidic residues-rich tracts occupy residues 291-300 and 359-368; these read KPTVKLKQEQ and LTKDKKVSKW. Over residues 452–463 the composition is skewed to low complexity; the sequence is SHESVQSESNEQ. Residues 556–733 form the tr-type G domain; that stretch reads RRPPVVTIMG…EVEDLQANPE (178 aa). A G1 region spans residues 565–572; sequence GHVDHGKT. Residue 565 to 572 participates in GTP binding; it reads GHVDHGKT. The tract at residues 590–594 is G2; sequence GITQH. Residues 615-618 are G3; that stretch reads DTPG. GTP-binding positions include 615–619 and 669–672; these read DTPGH and NKID. A G4 region spans residues 669 to 672; that stretch reads NKID. Residues 705–707 are G5; the sequence is SAI.

It belongs to the TRAFAC class translation factor GTPase superfamily. Classic translation factor GTPase family. IF-2 subfamily.

Its subcellular location is the cytoplasm. In terms of biological role, one of the essential components for the initiation of protein synthesis. Protects formylmethionyl-tRNA from spontaneous hydrolysis and promotes its binding to the 30S ribosomal subunits. Also involved in the hydrolysis of GTP during the formation of the 70S ribosomal complex. The protein is Translation initiation factor IF-2 of Trichodesmium erythraeum (strain IMS101).